We begin with the raw amino-acid sequence, 181 residues long: Peptidyl-tRNA hydrolase (181 aa).

Tyr-14 contacts tRNA. His-19 acts as the Proton acceptor in catalysis. TRNA-binding residues include Tyr-62, Asn-64, and Asn-108.

It belongs to the PTH family. Monomer.

The protein localises to the cytoplasm. It carries out the reaction an N-acyl-L-alpha-aminoacyl-tRNA + H2O = an N-acyl-L-amino acid + a tRNA + H(+). In terms of biological role, hydrolyzes ribosome-free peptidyl-tRNAs (with 1 or more amino acids incorporated), which drop off the ribosome during protein synthesis, or as a result of ribosome stalling. Functionally, catalyzes the release of premature peptidyl moieties from peptidyl-tRNA molecules trapped in stalled 50S ribosomal subunits, and thus maintains levels of free tRNAs and 50S ribosomes. This is Peptidyl-tRNA hydrolase from Campylobacter jejuni subsp. jejuni serotype O:23/36 (strain 81-176).